A 403-amino-acid polypeptide reads, in one-letter code: Aspartic protease pepA (403 aa).

The N-terminal stretch at 1 to 20 (MVLITQLGAALAVFSALTVA) is a signal peptide. Residues 21 to 67 (APTKGKARFSAPQVGIPKKAKHHPAAAYARALHKFGMKIPKAVSDAA) constitute a propeptide, activation peptide. A Peptidase A1 domain is found at 82-400 (YVTQVTVGGS…DTQGPRIGFA (319 aa)). Asp-98 is an active-site residue. Residue Asn-270 is glycosylated (N-linked (GlcNAc...) asparagine). The active site involves Asp-293. Cys-329 and Cys-362 are joined by a disulfide.

Belongs to the peptidase A1 family. In terms of assembly, monomer.

The protein resides in the secreted. Functionally, secreted aspartic endopeptidase that allows assimilation of proteinaceous substrates. The scissile peptide bond is attacked by a nucleophilic water molecule activated by two aspartic residues in the active site. Shows a broad primary substrate specificity. Favors hydrophobic residues at the P1 and P1' positions. This chain is Aspartic protease pepA, found in Arthroderma gypseum (strain ATCC MYA-4604 / CBS 118893) (Microsporum gypseum).